A 292-amino-acid polypeptide reads, in one-letter code: 4-hydroxy-tetrahydrodipicolinate synthase (292 aa).

Residue threonine 45 participates in pyruvate binding. Tyrosine 133 acts as the Proton donor/acceptor in catalysis. The active-site Schiff-base intermediate with substrate is lysine 161. Pyruvate is bound at residue isoleucine 203.

It belongs to the DapA family. Homotetramer; dimer of dimers.

It is found in the cytoplasm. The catalysed reaction is L-aspartate 4-semialdehyde + pyruvate = (2S,4S)-4-hydroxy-2,3,4,5-tetrahydrodipicolinate + H2O + H(+). The protein operates within amino-acid biosynthesis; L-lysine biosynthesis via DAP pathway; (S)-tetrahydrodipicolinate from L-aspartate: step 3/4. In terms of biological role, catalyzes the condensation of (S)-aspartate-beta-semialdehyde [(S)-ASA] and pyruvate to 4-hydroxy-tetrahydrodipicolinate (HTPA). This Vibrio cholerae serotype O1 (strain M66-2) protein is 4-hydroxy-tetrahydrodipicolinate synthase.